The primary structure comprises 138 residues: Ribulose bisphosphate carboxylase small subunit (138 aa).

Belongs to the RuBisCO small chain family. As to quaternary structure, heterohexadecamer of 8 large and 8 small subunits.

It is found in the plastid. The protein localises to the chloroplast. RuBisCO catalyzes two reactions: the carboxylation of D-ribulose 1,5-bisphosphate, the primary event in carbon dioxide fixation, as well as the oxidative fragmentation of the pentose substrate in the photorespiration process. Both reactions occur simultaneously and in competition at the same active site. Although the small subunit is not catalytic it is essential for maximal activity. This is Ribulose bisphosphate carboxylase small subunit from Pyropia suborbiculata (Red alga).